A 493-amino-acid chain; its full sequence is Galactose-1-phosphate uridylyltransferase (493 aa).

Belongs to the galactose-1-phosphate uridylyltransferase type 2 family.

It localises to the cytoplasm. The enzyme catalyses alpha-D-galactose 1-phosphate + UDP-alpha-D-glucose = alpha-D-glucose 1-phosphate + UDP-alpha-D-galactose. The protein operates within carbohydrate metabolism; galactose metabolism. The polypeptide is Galactose-1-phosphate uridylyltransferase (Streptococcus thermophilus (strain CNRZ 1066)).